Consider the following 80-residue polypeptide: Large ribosomal subunit protein bL28 (80 aa).

The tract at residues 1 to 23 is disordered; sequence MARVCQITGKKTRTGNNVSHANN.

Belongs to the bacterial ribosomal protein bL28 family.

The chain is Large ribosomal subunit protein bL28 from Cytophaga hutchinsonii (strain ATCC 33406 / DSM 1761 / CIP 103989 / NBRC 15051 / NCIMB 9469 / D465).